The primary structure comprises 190 residues: DNA-invertase hin (190 aa).

Positions 2–135 (ATIGYIRVST…AGLAAARAQG (134 aa)) constitute a Resolvase/invertase-type recombinase catalytic domain. Residue Ser10 is the O-(5'-phospho-DNA)-serine intermediate of the active site. The H-T-H motif DNA-binding region spans 162–181 (RQQLAIIFGIGVSTLYRYFP).

The protein belongs to the site-specific recombinase resolvase family.

Its function is as follows. A DNA fragment of approximately 900 base pairs, adjacent to the fljB (H2) gene, which specifies the synthesis of phase-2 flagellin, can exist in either orientation with respect to fljB. The orientation of the inversion region controls expression of fljB. The hin gene occupies about two-thirds of the inversion region; it is required for the inversion of the fljB controlling region. The polypeptide is DNA-invertase hin (hin) (Salmonella typhimurium (strain LT2 / SGSC1412 / ATCC 700720)).